The sequence spans 158 residues: Phosphopantetheine adenylyltransferase (158 aa).

Threonine 9 is a substrate binding site. ATP contacts are provided by residues 9-10 (TF) and histidine 17. Residues lysine 41, leucine 73, and arginine 87 each coordinate substrate. Residues 88–90 (GVR), glutamate 98, and 123–129 (WSYVSST) contribute to the ATP site.

Belongs to the bacterial CoaD family. Homohexamer. Mg(2+) serves as cofactor.

It localises to the cytoplasm. It catalyses the reaction (R)-4'-phosphopantetheine + ATP + H(+) = 3'-dephospho-CoA + diphosphate. The protein operates within cofactor biosynthesis; coenzyme A biosynthesis; CoA from (R)-pantothenate: step 4/5. In terms of biological role, reversibly transfers an adenylyl group from ATP to 4'-phosphopantetheine, yielding dephospho-CoA (dPCoA) and pyrophosphate. This Histophilus somni (strain 2336) (Haemophilus somnus) protein is Phosphopantetheine adenylyltransferase.